The primary structure comprises 169 residues: Peptide deformylase 1 (169 aa).

Fe cation contacts are provided by Cys-93 and His-135. Glu-136 is a catalytic residue. A Fe cation-binding site is contributed by His-139.

The protein belongs to the polypeptide deformylase family. Fe(2+) serves as cofactor.

The catalysed reaction is N-terminal N-formyl-L-methionyl-[peptide] + H2O = N-terminal L-methionyl-[peptide] + formate. Functionally, removes the formyl group from the N-terminal Met of newly synthesized proteins. Requires at least a dipeptide for an efficient rate of reaction. N-terminal L-methionine is a prerequisite for activity but the enzyme has broad specificity at other positions. In Corynebacterium efficiens (strain DSM 44549 / YS-314 / AJ 12310 / JCM 11189 / NBRC 100395), this protein is Peptide deformylase 1.